Reading from the N-terminus, the 244-residue chain is Phosphonates import ATP-binding protein PhnC (244 aa).

The region spanning 6 to 244 is the ABC transporter domain; sequence IECHNLETAY…LQAQFVVNSQ (239 aa). 41–48 contributes to the ATP binding site; it reads GLNGAGKS.

The protein belongs to the ABC transporter superfamily. Phosphonates importer (TC 3.A.1.9.1) family. The complex is composed of two ATP-binding proteins (PhnC), two transmembrane proteins (PhnE) and a solute-binding protein (PhnD).

Its subcellular location is the cell inner membrane. It carries out the reaction phosphonate(out) + ATP + H2O = phosphonate(in) + ADP + phosphate + H(+). In terms of biological role, part of the ABC transporter complex PhnCDE involved in phosphonates import. Responsible for energy coupling to the transport system. In Trichormus variabilis (strain ATCC 29413 / PCC 7937) (Anabaena variabilis), this protein is Phosphonates import ATP-binding protein PhnC.